The primary structure comprises 95 residues: RING finger protein Z (95 aa).

Gly2 is lipidated: N-myristoyl glycine; by host. The RING-type; atypical zinc finger occupies 38–74; that stretch reads CKSCWFANKGLIKCSNHYLCLKCLTAMLSRSDYCGIC. Residues 88 to 91 carry the PTAP/PSAP motif motif; it reads PSAP.

The protein belongs to the arenaviridae Z protein family. As to quaternary structure, interacts with protein NP; this interaction probably directs the encapsidated genome to budding sites. Interacts (via RING domain) with polymerase L; this interaction inhibits viral transcription and replication, Z partially blocks the product exit tunnel for the releasing nascent RNA product. Interacts with the glycoprotein complex; this interaction plays a role in virion budding. Interacts with host eIF4E; this interaction results in eIF4E reduced affinity for its substrate, the 5'-m7 G cap structure. Interacts (via late-budding domain) with host TSG101; this interaction is essential for budding and release of viral particles. Interacts with host RPLP0; this interaction may serve to load ribosome-like particles inside the virion. Interacts with host PML; this interaction induces PML bodies redistribution in the cytoplasm upon viral infection. In terms of processing, myristoylation is required for the role of RING finger protein Z in assembly and budding.

It localises to the virion. The protein resides in the host cytoplasm. Its subcellular location is the host perinuclear region. It is found in the host cell membrane. In terms of biological role, plays a crucial role in virion assembly and budding. Expressed late in the virus life cycle, it acts as an inhibitor of viral transcription and RNA synthesis by interacting with the viral polymerase L. Presumably recruits the NP encapsidated genome to cellular membranes at budding sites via direct interaction with NP. Plays critical roles in the final steps of viral release by interacting with host TSG101, a member of the vacuolar protein-sorting pathway and using other cellular host proteins involved in vesicle formation pathway. The budding of the virus progeny occurs after association of protein Z with the viral glycoprotein complex SSP-GP1-GP2 at the cell periphery, step that requires myristoylation of protein Z. Also selectively represses protein production by associating with host eIF4E. In cell-based minigenome assay, has an inhibitory effect on the ribonucleoprotein machinery (vRNP), which is responsible for the replication and transcription of the viral genome. The sequence is that of RING finger protein Z from Bear Canyon mammarenavirus (isolate Mouse/United States/AV A0070039/2000) (BCNV).